Here is a 535-residue protein sequence, read N- to C-terminus: Inositol 1,4,5-trisphosphate receptor-interacting protein-like 2 (535 aa).

Residues 1–38 form the signal peptide; that stretch reads MSVHYTLNLRVFWPLVTGLCTALVCLYHVLRGSGGARA. At 39 to 43 the chain is on the extracellular side; sequence EPADG. A helical transmembrane segment spans residues 44–64; that stretch reads VDGGFPLLKVAVLLLLSYVLL. Over 65-535 the chain is Cytoplasmic; that stretch reads RCRHAVRQRF…RTQGFLEGEP (471 aa). Ser-139 is subject to Phosphoserine.

The protein belongs to the ITPRIP family.

It localises to the membrane. This Homo sapiens (Human) protein is Inositol 1,4,5-trisphosphate receptor-interacting protein-like 2 (ITPRIPL2).